Consider the following 595-residue polypeptide: Isoprene synthase, chloroplastic (595 aa).

Residues Met-1–Arg-37 constitute a chloroplast transit peptide. Asp-345 is a binding site for dimethylallyl diphosphate. Residues Asp-345 and Asp-349 each coordinate Mg(2+). Residues Asp-345–Asp-349 carry the DDXXD motif motif. Glu-423, Arg-486, and Asn-489 together coordinate dimethylallyl diphosphate. Mg(2+) contacts are provided by Asn-489, Ser-493, and Glu-497.

The protein belongs to the terpene synthase family. Tpsb subfamily. Homodimer. Mg(2+) is required as a cofactor. Requires Mn(2+) as cofactor.

Its subcellular location is the plastid. It is found in the chloroplast. It carries out the reaction dimethylallyl diphosphate = isoprene + diphosphate. It participates in secondary metabolite biosynthesis; terpenoid biosynthesis. Competitive inhibition is mediated by geranyl diphosphate (GPP). In terms of biological role, lyase that catalyzes the formation of isoprene from dimethylallyl diphosphate via a syn-periplanar elimination mechanism in which the diphosphate-leaving group serves as a general base. The sequence is that of Isoprene synthase, chloroplastic from Populus canescens (Grey poplar).